An 861-amino-acid polypeptide reads, in one-letter code: Probable beta-glucosidase A (861 aa).

The first 19 residues, 1–19 (MKLGWIEVAALAAASVVSA), serve as a signal peptide directing secretion. N62, N212, and N253 each carry an N-linked (GlcNAc...) asparagine glycan. D281 is a catalytic residue. 10 N-linked (GlcNAc...) asparagine glycosylation sites follow: N316, N323, N355, N443, N524, N543, N565, N669, N713, and N846.

This sequence belongs to the glycosyl hydrolase 3 family.

It is found in the secreted. It carries out the reaction Hydrolysis of terminal, non-reducing beta-D-glucosyl residues with release of beta-D-glucose.. The protein operates within glycan metabolism; cellulose degradation. In terms of biological role, beta-glucosidases are one of a number of cellulolytic enzymes involved in the degradation of cellulosic biomass. Catalyzes the last step releasing glucose from the inhibitory cellobiose. This is Probable beta-glucosidase A (bglA) from Aspergillus flavus (strain ATCC 200026 / FGSC A1120 / IAM 13836 / NRRL 3357 / JCM 12722 / SRRC 167).